The primary structure comprises 1595 residues: Pentafunctional AROM polypeptide (1595 aa).

Residues 1–384 (MGVPTKISIL…HEPRASTVSN (384 aa)) form a 3-dehydroquinate synthase region. NAD(+) is bound by residues 44-46 (DTN), 81-84 (ESSK), 114-116 (GGV), and Asp119. Arg130 is a 7-phospho-2-dehydro-3-deoxy-D-arabino-heptonate binding site. Position 139–140 (139–140 (TT)) interacts with NAD(+). Residues Asp146 and Lys152 each coordinate 7-phospho-2-dehydro-3-deoxy-D-arabino-heptonate. Position 161 (Lys161) interacts with NAD(+). Asn162 contributes to the 7-phospho-2-dehydro-3-deoxy-D-arabino-heptonate binding site. NAD(+)-binding positions include 179 to 182 (FLNT) and Asn190. Glu194 contacts Zn(2+). Residues 194 to 197 (EVIK) and Lys250 each bind 7-phospho-2-dehydro-3-deoxy-D-arabino-heptonate. Catalysis depends on Glu260, which acts as the Proton acceptor; for 3-dehydroquinate synthase activity. 7-phospho-2-dehydro-3-deoxy-D-arabino-heptonate-binding positions include 264 to 268 (RNLLN) and His271. His271 lines the Zn(2+) pocket. His275 acts as the Proton acceptor; for 3-dehydroquinate synthase activity in catalysis. Positions 287 and 356 each coordinate 7-phospho-2-dehydro-3-deoxy-D-arabino-heptonate. His287 provides a ligand contact to Zn(2+). The interval 397-842 (VSPGVPKGLD…WDSLAQTFKV (446 aa)) is EPSP synthase. Residue Cys824 is the For EPSP synthase activity of the active site. Residues 866 to 1057 (ASIFIIGMRG…RRKENTFFVS (192 aa)) are shikimate kinase. Residue 872–879 (GMRGAGKT) coordinates ATP. The interval 1058 to 1278 (LTLPDLSLAA…AAPGQLSARE (221 aa)) is 3-dehydroquinase. The Proton acceptor; for 3-dehydroquinate dehydratase activity role is filled by His1181. Catalysis depends on Lys1209, which acts as the Schiff-base intermediate with substrate; for 3-dehydroquinate dehydratase activity. The shikimate dehydrogenase stretch occupies residues 1291–1595 (AKKFAVIGNP…MGVSPSEDIL (305 aa)).

This sequence in the N-terminal section; belongs to the sugar phosphate cyclases superfamily. Dehydroquinate synthase family. It in the 2nd section; belongs to the EPSP synthase family. In the 3rd section; belongs to the shikimate kinase family. The protein in the 4th section; belongs to the type-I 3-dehydroquinase family. This sequence in the C-terminal section; belongs to the shikimate dehydrogenase family. Homodimer. Zn(2+) is required as a cofactor.

It localises to the cytoplasm. It carries out the reaction 7-phospho-2-dehydro-3-deoxy-D-arabino-heptonate = 3-dehydroquinate + phosphate. The catalysed reaction is 3-dehydroquinate = 3-dehydroshikimate + H2O. The enzyme catalyses shikimate + NADP(+) = 3-dehydroshikimate + NADPH + H(+). It catalyses the reaction shikimate + ATP = 3-phosphoshikimate + ADP + H(+). It carries out the reaction 3-phosphoshikimate + phosphoenolpyruvate = 5-O-(1-carboxyvinyl)-3-phosphoshikimate + phosphate. The protein operates within metabolic intermediate biosynthesis; chorismate biosynthesis; chorismate from D-erythrose 4-phosphate and phosphoenolpyruvate: step 2/7. It participates in metabolic intermediate biosynthesis; chorismate biosynthesis; chorismate from D-erythrose 4-phosphate and phosphoenolpyruvate: step 3/7. It functions in the pathway metabolic intermediate biosynthesis; chorismate biosynthesis; chorismate from D-erythrose 4-phosphate and phosphoenolpyruvate: step 4/7. Its pathway is metabolic intermediate biosynthesis; chorismate biosynthesis; chorismate from D-erythrose 4-phosphate and phosphoenolpyruvate: step 5/7. The protein operates within metabolic intermediate biosynthesis; chorismate biosynthesis; chorismate from D-erythrose 4-phosphate and phosphoenolpyruvate: step 6/7. In terms of biological role, the AROM polypeptide catalyzes 5 consecutive enzymatic reactions in prechorismate polyaromatic amino acid biosynthesis. This Ajellomyces capsulatus (strain G186AR / H82 / ATCC MYA-2454 / RMSCC 2432) (Darling's disease fungus) protein is Pentafunctional AROM polypeptide.